Consider the following 1845-residue polypeptide: Helicase swr-1 (1845 aa).

Over residues Met1–Asp13 the composition is skewed to polar residues. The tract at residues Met1–Lys329 is disordered. The segment covering Asn24–Asp38 has biased composition (low complexity). The segment covering Ser63–Asn84 has biased composition (polar residues). Residues Ser98–Ser108 show a composition bias toward low complexity. The span at Pro168–Ala180 shows a compositional bias: basic and acidic residues. The segment covering Ala216–Lys243 has biased composition (polar residues). Pro residues-rich tracts occupy residues Lys248–Ala258 and Pro283–Pro292. The region spanning Pro418–Arg493 is the HSA domain. Disordered stretches follow at residues Gln539–Gly713 and Glu749–Thr935. A compositionally biased stretch (acidic residues) spans Asp549–Leu565. The segment covering Gly574 to Gln585 has biased composition (basic and acidic residues). Composition is skewed to acidic residues over residues Gly586–Asp608 and Asn663–Pro704. 2 stretches are compositionally biased toward polar residues: residues Thr762 to Glu777 and Thr815 to Leu834. Residues Ser888–Thr897 show a composition bias toward low complexity. The span at Thr898–His909 shows a compositional bias: basic and acidic residues. Residues Arg922–Val933 are compositionally biased toward polar residues. Residues Ala957–Pro1122 form the Helicase ATP-binding domain. ATP is bound at residue Asp970 to Thr977. Positions Asp1073–His1076 match the DEAH box motif. One can recognise a Helicase C-terminal domain in the interval Ala1510–Thr1660. Disordered regions lie at residues Thr1702–Arg1724, Gln1751–Glu1783, and Leu1816–Arg1845. Gly residues predominate over residues Gly1704–Ala1718. The segment covering Asp1769–Gly1781 has biased composition (low complexity). A compositionally biased stretch (basic residues) spans Asp1826–Arg1845.

Belongs to the SNF2/RAD54 helicase family. SWR1 subfamily. As to quaternary structure, component of the SWR1 chromatin-remodeling complex.

It localises to the nucleus. The enzyme catalyses ATP + H2O = ADP + phosphate + H(+). Functionally, catalytic component of the SWR1 complex which mediates the ATP-dependent exchange of histone H2A for the H2A variant H2A.Z leading to transcriptional regulation of selected genes by chromatin remodeling. This Neurospora crassa (strain ATCC 24698 / 74-OR23-1A / CBS 708.71 / DSM 1257 / FGSC 987) protein is Helicase swr-1 (crf1-1).